Consider the following 208-residue polypeptide: Methylthioribulose-1-phosphate dehydratase (208 aa).

Zn(2+) is bound by residues H101 and H103.

The protein belongs to the aldolase class II family. MtnB subfamily. The cofactor is Zn(2+).

The catalysed reaction is 5-(methylsulfanyl)-D-ribulose 1-phosphate = 5-methylsulfanyl-2,3-dioxopentyl phosphate + H2O. It functions in the pathway amino-acid biosynthesis; L-methionine biosynthesis via salvage pathway; L-methionine from S-methyl-5-thio-alpha-D-ribose 1-phosphate: step 2/6. Functionally, catalyzes the dehydration of methylthioribulose-1-phosphate (MTRu-1-P) into 2,3-diketo-5-methylthiopentyl-1-phosphate (DK-MTP-1-P). This chain is Methylthioribulose-1-phosphate dehydratase, found in Gluconobacter oxydans (strain 621H) (Gluconobacter suboxydans).